The following is a 186-amino-acid chain: dCTP deaminase (186 aa).

K107 to R112 provides a ligand contact to dCTP. Residue E133 is the Proton donor/acceptor of the active site. Q152, Y166, and Q176 together coordinate dCTP.

Belongs to the dCTP deaminase family. As to quaternary structure, homotrimer.

The enzyme catalyses dCTP + H2O + H(+) = dUTP + NH4(+). It functions in the pathway pyrimidine metabolism; dUMP biosynthesis; dUMP from dCTP (dUTP route): step 1/2. Functionally, catalyzes the deamination of dCTP to dUTP. In Chloroflexus aurantiacus (strain ATCC 29366 / DSM 635 / J-10-fl), this protein is dCTP deaminase.